The chain runs to 126 residues: MAKSLRSKWRRKMRAEKRKKVAPKELARLKSALGQGEKGEISMKDVAEIATVVPPEKVKQKPADVDMQEEEADGGKMDLDTKRNKKTMLDEHGRYPVWMNQRQAKKLKAKRVGKNGKPKPKKRLAW.

Residues M1–V21 are compositionally biased toward basic residues. Disordered stretches follow at residues M1–A22 and V53–W126. The span at D73 to R94 shows a compositional bias: basic and acidic residues. Residues Q103–W126 are compositionally biased toward basic residues.

Belongs to the learning-associated protein family.

It localises to the nucleus. The protein localises to the nucleolus. Its subcellular location is the chromosome. Functionally, regulates dendritic and spine growth and synaptic transmission. This is Protein LLP homolog (llph) from Danio rerio (Zebrafish).